Reading from the N-terminus, the 64-residue chain is Translation machinery-associated protein 7 homolog (64 aa).

The disordered stretch occupies residues 1–64; the sequence is MSGREGGKKK…GGGIKKSGKK (64 aa). The segment covering 27 to 38 has biased composition (basic and acidic residues); the sequence is MAFKQKQKEQQK. Positions 27 to 50 form a coiled coil; sequence MAFKQKQKEQQKALEAAKANASKK. A compositionally biased stretch (low complexity) spans 39–50; that stretch reads ALEAAKANASKK. Gly residues predominate over residues 53–64; that stretch reads LVGGGIKKSGKK.

This Drosophila melanogaster (Fruit fly) protein is Translation machinery-associated protein 7 homolog.